Reading from the N-terminus, the 504-residue chain is Maturase K (504 aa).

Belongs to the intron maturase 2 family. MatK subfamily.

It localises to the plastid. The protein localises to the chloroplast. In terms of biological role, usually encoded in the trnK tRNA gene intron. Probably assists in splicing its own and other chloroplast group II introns. The protein is Maturase K of Gossypium gossypioides (Mexican cotton).